The sequence spans 131 residues: Leptin receptor gene-related protein (131 aa).

Helical transmembrane passes span 7 to 27 (LVGL…GCAL), 32 to 52 (VYWP…HFIA), 69 to 89 (LAYF…IILA), and 100 to 120 (GLVL…FLVF).

It belongs to the OB-RGRP/VPS55 family.

It localises to the golgi apparatus membrane. Its subcellular location is the endosome membrane. Functionally, involved in protein trafficking. May be involved in the down-regulation of membrane protein levels. This Gallus gallus (Chicken) protein is Leptin receptor gene-related protein (LEPROT).